A 219-amino-acid chain; its full sequence is Large ribosomal subunit protein bL25 (219 aa).

The segment at 176–219 (VTVVPPTDEPSEEEVEAMEGESATEEPEVVGEDKEDDEEENKED) is disordered. A compositionally biased stretch (acidic residues) spans 184-219 (EPSEEEVEAMEGESATEEPEVVGEDKEDDEEENKED).

Belongs to the bacterial ribosomal protein bL25 family. CTC subfamily. As to quaternary structure, part of the 50S ribosomal subunit; part of the 5S rRNA/L5/L18/L25 subcomplex. Contacts the 5S rRNA. Binds to the 5S rRNA independently of L5 and L18.

This is one of the proteins that binds to the 5S RNA in the ribosome where it forms part of the central protuberance. The sequence is that of Large ribosomal subunit protein bL25 from Staphylococcus epidermidis (strain ATCC 35984 / DSM 28319 / BCRC 17069 / CCUG 31568 / BM 3577 / RP62A).